The primary structure comprises 167 residues: Novel acetylcholine receptor chaperone (167 aa).

Residues 1-5 (MASPR) are Cytoplasmic-facing. The chain crosses the membrane as a helical span at residues 6–26 (TVTIVALSVALGLFFVFMGTI). Topologically, residues 27-61 (KLTPRLSKDAYSEMKRAYKSYVRALPLLKKMGINS) are lumenal. The tract at residues 43-54 (AYKSYVRALPLL) is interaction with NGFR. A helical membrane pass occupies residues 62–82 (ILLRKSIGALEVACGIVMTLV). At 83 to 88 (PGRPKD) the chain is on the cytoplasmic side. Residues 89-109 (VANFFLLLLVLAVLFFHQLVG) traverse the membrane as a helical segment. Residues 110 to 114 (DPLKR) lie on the Lumenal side of the membrane. A helical membrane pass occupies residues 115 to 132 (YAHALVFGILLTCRLLIA). Residues 133–167 (RKPEDRSSEKKPLPGNAEEQPSLYEKAPQGKVKVS) lie on the Cytoplasmic side of the membrane. Positions 136–167 (EDRSSEKKPLPGNAEEQPSLYEKAPQGKVKVS) are disordered.

This sequence belongs to the DoxX family. May interact with NGFR. Interacts with RPN1, RPN2 and CANX.

It is found in the peroxisome membrane. It localises to the cytoplasmic vesicle. The protein resides in the endoplasmic reticulum membrane. Its function is as follows. Molecular chaperone which mediates the proper assembly and functional expression of the nicotinic acetylcholine receptors (nAChRs) throughout the brain. Essential for the proper folding, assembly, function and surface trafficking of alpha-7 (CHRNA7), alpha-4-beta-2, alpha-3-beta-2 and alpha-3-beta-4 receptors. Stably associates with ribophorin-1 (RPN1) and ribophorin-2 (RPN2) (components of the oligosaccharyl transferase (OST) complex) and with calnexin (CANX), both of which are critical for NACHO-mediated effects on CHRNA7 assembly and function. Facilitates the proper folding and assembly of alpha-6-beta-2 and alpha-6-beta-2-beta-3 receptors and acts at early stages of the nAChRs subunit assembly. Promotes the expression of the alpha-4(2):beta-2(3) stoichiometric form over the alpha-4(3):beta-2(2) form. The chain is Novel acetylcholine receptor chaperone (TMEM35A) from Macaca fascicularis (Crab-eating macaque).